Reading from the N-terminus, the 273-residue chain is ATP synthase subunit delta (273 aa).

The interval 55 to 78 (TDPAQSARPRPSSPSVSSAPRSAA) is disordered. Over residues 57–78 (PAQSARPRPSSPSVSSAPRSAA) the composition is skewed to low complexity.

This sequence belongs to the ATPase delta chain family. F-type ATPases have 2 components, F(1) - the catalytic core - and F(0) - the membrane proton channel. F(1) has five subunits: alpha(3), beta(3), gamma(1), delta(1), epsilon(1). F(0) has three main subunits: a(1), b(2) and c(10-14). The alpha and beta chains form an alternating ring which encloses part of the gamma chain. F(1) is attached to F(0) by a central stalk formed by the gamma and epsilon chains, while a peripheral stalk is formed by the delta and b chains.

The protein localises to the cell membrane. Functionally, f(1)F(0) ATP synthase produces ATP from ADP in the presence of a proton or sodium gradient. F-type ATPases consist of two structural domains, F(1) containing the extramembraneous catalytic core and F(0) containing the membrane proton channel, linked together by a central stalk and a peripheral stalk. During catalysis, ATP synthesis in the catalytic domain of F(1) is coupled via a rotary mechanism of the central stalk subunits to proton translocation. In terms of biological role, this protein is part of the stalk that links CF(0) to CF(1). It either transmits conformational changes from CF(0) to CF(1) or is implicated in proton conduction. This Streptomyces lividans protein is ATP synthase subunit delta.